The primary structure comprises 152 residues: Superoxide dismutase [Cu-Zn] (152 aa).

Positions 45, 47, and 62 each coordinate Cu cation. C56 and C145 are disulfide-bonded. Positions 62, 70, 79, and 82 each coordinate Zn(2+). Residue H119 coordinates Cu cation.

It belongs to the Cu-Zn superoxide dismutase family. As to quaternary structure, homodimer. The cofactor is Cu cation. Zn(2+) is required as a cofactor.

The protein localises to the cytoplasm. It carries out the reaction 2 superoxide + 2 H(+) = H2O2 + O2. In terms of biological role, destroys radicals which are normally produced within the cells and which are toxic to biological systems. The protein is Superoxide dismutase [Cu-Zn] (SODCC) of Brassica oleracea var. capitata (Cabbage).